Reading from the N-terminus, the 176-residue chain is dCTP deaminase (176 aa).

Residues 99 to 104 (RSTLAR) and D115 each bind dCTP. The active-site Proton donor/acceptor is the E125. Q163 provides a ligand contact to dCTP.

This sequence belongs to the dCTP deaminase family. Homotrimer.

It catalyses the reaction dCTP + H2O + H(+) = dUTP + NH4(+). Its pathway is pyrimidine metabolism; dUMP biosynthesis; dUMP from dCTP (dUTP route): step 1/2. Functionally, catalyzes the deamination of dCTP to dUTP. This Pyrobaculum aerophilum (strain ATCC 51768 / DSM 7523 / JCM 9630 / CIP 104966 / NBRC 100827 / IM2) protein is dCTP deaminase.